Reading from the N-terminus, the 89-residue chain is Small ribosomal subunit protein uS15 (89 aa).

The segment at 1–23 (MALTKERTASVVQQYGSGEKDTG) is disordered.

Belongs to the universal ribosomal protein uS15 family. In terms of assembly, part of the 30S ribosomal subunit. Forms a bridge to the 50S subunit in the 70S ribosome, contacting the 23S rRNA.

Functionally, one of the primary rRNA binding proteins, it binds directly to 16S rRNA where it helps nucleate assembly of the platform of the 30S subunit by binding and bridging several RNA helices of the 16S rRNA. Forms an intersubunit bridge (bridge B4) with the 23S rRNA of the 50S subunit in the ribosome. The polypeptide is Small ribosomal subunit protein uS15 (Treponema pallidum (strain Nichols)).